The following is a 647-amino-acid chain: DNA mismatch repair protein MutL (647 aa).

The protein belongs to the DNA mismatch repair MutL/HexB family.

In terms of biological role, this protein is involved in the repair of mismatches in DNA. It is required for dam-dependent methyl-directed DNA mismatch repair. May act as a 'molecular matchmaker', a protein that promotes the formation of a stable complex between two or more DNA-binding proteins in an ATP-dependent manner without itself being part of a final effector complex. The polypeptide is DNA mismatch repair protein MutL (Bacillus cereus (strain ATCC 10987 / NRS 248)).